We begin with the raw amino-acid sequence, 125 residues long: Putative RNA polymerase sigma-G factor (125 aa).

The protein belongs to the sigma-70 factor family.

In terms of biological role, sigma factors are initiation factors that promote the attachment of RNA polymerase to specific initiation sites and are then released. This chain is Putative RNA polymerase sigma-G factor, found in Bacillus thuringiensis subsp. kurstaki.